Here is an 85-residue protein sequence, read N- to C-terminus: Large ribosomal subunit protein bL27 (85 aa).

A disordered region spans residues 1–20; that stretch reads MAHKKAGGSTRNGRDSESKR.

It belongs to the bacterial ribosomal protein bL27 family.

The protein is Large ribosomal subunit protein bL27 of Yersinia enterocolitica serotype O:8 / biotype 1B (strain NCTC 13174 / 8081).